The primary structure comprises 838 residues: G-protein coupled receptor-associated sorting protein 2 (838 aa).

Disordered stretches follow at residues 1-122 (MTGA…GARP), 218-292 (ASNE…SNPF), 349-368 (RFRHRDKEDPNTALKLRAQK), and 531-552 (LELSPEGEEQESLLQPDQPSPE). Residues 13-31 (KPEKKAGEEVIAGPEREND) show a composition bias toward basic and acidic residues. Over residues 220-245 (NESGFWSADETSTASSFWTGEETSVR) the composition is skewed to polar residues. A compositionally biased stretch (basic residues) spans 255 to 271 (RSRHRAKHQTNPRSRPR). Phosphoserine is present on residues Ser282 and Ser284. Polar residues predominate over residues 542–552 (SLLQPDQPSPE).

Belongs to the GPRASP family. In terms of assembly, interacts with cytoplasmic tails of a variety of G-protein coupled receptors such as muscarinic acetylcholine receptor M1/CHRM1 and calcitonin receptor/CALCR. Expressed in the brain.

Its function is as follows. May play a role in regulation of a variety of G-protein coupled receptors. The sequence is that of G-protein coupled receptor-associated sorting protein 2 (GPRASP2) from Homo sapiens (Human).